The following is a 238-amino-acid chain: SH2 domain-containing adapter protein F (238 aa).

Disordered regions lie at residues 1 to 70 and 85 to 121; these read MEPY…PWEW and GSEN…EPSS. Ser39 is subject to Phosphoserine. The span at 55 to 66 shows a compositional bias: acidic residues; it reads EDDERPPEEYDQ. Tyr64 bears the Phosphotyrosine mark. Residues 138–233 enclose the SH2 domain; it reads WYHGAISRTD…AEHMSLLYPV (96 aa).

Interacts with phosphorylated 'Tyr-720' of PDGFRA via its SH2 domain. In terms of processing, may become phosphorylated upon binding to PDGFRA.

Adapter protein which may play a role in the regulation of apoptosis in response to PDGF. The sequence is that of SH2 domain-containing adapter protein F from Mus musculus (Mouse).